Reading from the N-terminus, the 221-residue chain is Ribosomal RNA large subunit methyltransferase E (221 aa).

5 residues coordinate S-adenosyl-L-methionine: Gly-72, Trp-74, Asp-91, Asp-107, and Asp-131. The active-site Proton acceptor is Lys-171.

This sequence belongs to the class I-like SAM-binding methyltransferase superfamily. RNA methyltransferase RlmE family.

The protein resides in the cytoplasm. The catalysed reaction is uridine(2552) in 23S rRNA + S-adenosyl-L-methionine = 2'-O-methyluridine(2552) in 23S rRNA + S-adenosyl-L-homocysteine + H(+). Specifically methylates the uridine in position 2552 of 23S rRNA at the 2'-O position of the ribose in the fully assembled 50S ribosomal subunit. This is Ribosomal RNA large subunit methyltransferase E from Zymomonas mobilis subsp. mobilis (strain ATCC 31821 / ZM4 / CP4).